A 128-amino-acid chain; its full sequence is Small ribosomal subunit protein uS12 (128 aa).

Aspartate 89 is subject to 3-methylthioaspartic acid. The segment at 101 to 128 is disordered; sequence SLDTSGVADRRQGRSKYGAKRPKGAAAK. Residues 113–128 are compositionally biased toward basic residues; it reads GRSKYGAKRPKGAAAK.

The protein belongs to the universal ribosomal protein uS12 family. As to quaternary structure, part of the 30S ribosomal subunit. Contacts proteins S8 and S17. May interact with IF1 in the 30S initiation complex.

Its function is as follows. With S4 and S5 plays an important role in translational accuracy. Functionally, interacts with and stabilizes bases of the 16S rRNA that are involved in tRNA selection in the A site and with the mRNA backbone. Located at the interface of the 30S and 50S subunits, it traverses the body of the 30S subunit contacting proteins on the other side and probably holding the rRNA structure together. The combined cluster of proteins S8, S12 and S17 appears to hold together the shoulder and platform of the 30S subunit. The sequence is that of Small ribosomal subunit protein uS12 from Prosthecochloris aestuarii (strain DSM 271 / SK 413).